Consider the following 741-residue polypeptide: DNA ligase (741 aa).

NAD(+) contacts are provided by residues 78–82 (DADYD), 127–128 (SL), and E161. Residue K163 is the N6-AMP-lysine intermediate of the active site. R184, E219, K335, and K359 together coordinate NAD(+). Residues C464, C467, C482, and C488 each coordinate Zn(2+). In terms of domain architecture, BRCT spans 662-741 (VGDSPVAGKT…DAWRVLAGLA (80 aa)).

This sequence belongs to the NAD-dependent DNA ligase family. LigA subfamily. Mg(2+) is required as a cofactor. The cofactor is Mn(2+).

It catalyses the reaction NAD(+) + (deoxyribonucleotide)n-3'-hydroxyl + 5'-phospho-(deoxyribonucleotide)m = (deoxyribonucleotide)n+m + AMP + beta-nicotinamide D-nucleotide.. DNA ligase that catalyzes the formation of phosphodiester linkages between 5'-phosphoryl and 3'-hydroxyl groups in double-stranded DNA using NAD as a coenzyme and as the energy source for the reaction. It is essential for DNA replication and repair of damaged DNA. The polypeptide is DNA ligase (Dinoroseobacter shibae (strain DSM 16493 / NCIMB 14021 / DFL 12)).